The primary structure comprises 211 residues: Peptide methionine sulfoxide reductase MsrA (211 aa).

The active site involves Cys-52.

This sequence belongs to the MsrA Met sulfoxide reductase family.

The catalysed reaction is L-methionyl-[protein] + [thioredoxin]-disulfide + H2O = L-methionyl-(S)-S-oxide-[protein] + [thioredoxin]-dithiol. It catalyses the reaction [thioredoxin]-disulfide + L-methionine + H2O = L-methionine (S)-S-oxide + [thioredoxin]-dithiol. Functionally, has an important function as a repair enzyme for proteins that have been inactivated by oxidation. Catalyzes the reversible oxidation-reduction of methionine sulfoxide in proteins to methionine. This Photobacterium profundum (strain SS9) protein is Peptide methionine sulfoxide reductase MsrA.